We begin with the raw amino-acid sequence, 177 residues long: ATP synthase subunit delta (177 aa).

It belongs to the ATPase delta chain family. In terms of assembly, F-type ATPases have 2 components, F(1) - the catalytic core - and F(0) - the membrane proton channel. F(1) has five subunits: alpha(3), beta(3), gamma(1), delta(1), epsilon(1). F(0) has three main subunits: a(1), b(2) and c(10-14). The alpha and beta chains form an alternating ring which encloses part of the gamma chain. F(1) is attached to F(0) by a central stalk formed by the gamma and epsilon chains, while a peripheral stalk is formed by the delta and b chains.

The protein localises to the cell inner membrane. F(1)F(0) ATP synthase produces ATP from ADP in the presence of a proton or sodium gradient. F-type ATPases consist of two structural domains, F(1) containing the extramembraneous catalytic core and F(0) containing the membrane proton channel, linked together by a central stalk and a peripheral stalk. During catalysis, ATP synthesis in the catalytic domain of F(1) is coupled via a rotary mechanism of the central stalk subunits to proton translocation. In terms of biological role, this protein is part of the stalk that links CF(0) to CF(1). It either transmits conformational changes from CF(0) to CF(1) or is implicated in proton conduction. The protein is ATP synthase subunit delta of Shewanella sp. (strain MR-4).